The following is a 202-amino-acid chain: Zinc metalloproteinase barnettlysin-1 (202 aa).

Residues 6-200 (RYVELFIVVD…MKENPQCILN (195 aa)) enclose the Peptidase M12B domain. Positions 9 and 93 each coordinate Ca(2+). 3 disulfides stabilise this stretch: Cys-117–Cys-197, Cys-157–Cys-181, and Cys-159–Cys-164. Zn(2+) is bound at residue His-142. Glu-143 is a catalytic residue. Residues His-146 and His-152 each coordinate Zn(2+). The Ca(2+) site is built by Cys-197 and Asn-200.

In terms of assembly, monomer. It depends on Zn(2+) as a cofactor. In terms of tissue distribution, expressed by the venom gland.

The protein resides in the secreted. Its function is as follows. Non-hemorrhagic metalloproteinase that hydrolyzes the alpha chains of fibrinogen and fibrin but has no activity on beta- and gamma-chains. Cleaves X-Leu bonds. Inhibits platelet aggregation induced by the von Willebrand factor (VWF) (IC(50) is 1.4 uM) and type I collagen (IC(50) is 3.2 uM). Acts by cleaving the vWF and its receptor GPIb, and by cleaving the collagen-binding Alpha-2A domain of the collagen receptor alpha-2/beta-1 integrin (ITGA2/ITGB1). Also degrades the extracellular matrix protein fibronectin (FN1), but has no effect on laminin and type I collagen. This Bothrops barnetti (Barnett's lancehead) protein is Zinc metalloproteinase barnettlysin-1.